The sequence spans 410 residues: Lipid droplet-regulating VLDL assembly factor AUP1 (410 aa).

Met1 is subject to N-acetylmethionine. Residues 1 to 20 (MEPPPAPGPERLFDSHRLPS) are Cytoplasmic-facing. The stretch at 21–41 (DGFLLLALLLYAPVGLCLLVL) is an intramembrane region. At 42 to 410 (RLFLGLHVFL…FRERQAQEAE (369 aa)) the chain is on the cytoplasmic side. Positions 259 to 293 (LTPADKAEHMKRQRHPRLRPQSVQSSFPSPPSPSS) are disordered. Ser292 is modified (phosphoserine). A CUE domain is found at 296–338 (QLTILAQRVKEVLPHVPLNVIQRDLARTGCVDLTITNLLEGAV). The interval 348–367 (GSQSLPTASAPKFPSSGLVT) is disordered. Ser363 carries the post-translational modification Phosphoserine. At Thr367 the chain carries Phosphothreonine.

Belongs to the AUP1 family. Identified in a complex that contains SEL1L, OS9, FAF2/UBXD8, UBE2J1/UBC6E and AUP1. Interacts with the cytoplasmic tail of ITGA2B, ITGA1, ITGA2, ITGA5, ITGAV and ITGAM. Interacts (via C-terminus) with UBE2G2; the interaction recruits UBE2G2 to lipid droplets. Interacts with ubiquitin ligases AMFR/gp78 and RNF139/TRC8; this promotes interaction of UBE2G2 with AMFR and RNF139. Interacts with apolipoprotein APOB. Monoubiquitinated and diubiquitinated.

The protein resides in the endoplasmic reticulum membrane. It is found in the lipid droplet. Its function is as follows. Plays a role in the translocation of terminally misfolded proteins from the endoplasmic reticulum lumen to the cytoplasm and their degradation by the proteasome. Plays a role in lipid droplet formation. Induces lipid droplet clustering. Recruits ubiquitin-conjugating enzyme UBE2G2 to lipid droplets which facilitates its interaction with ubiquitin ligases AMFR/gp78 and RNF139/TRC8, leading to sterol-induced ubiquitination of HMGCR and its subsequent proteasomal degradation. Also required for the degradation of INSIG1, SREBF1 and SREBF2. Plays a role in regulating assembly and secretion of very low density lipoprotein particles and stability of apolipoprotein APOB. In Rattus norvegicus (Rat), this protein is Lipid droplet-regulating VLDL assembly factor AUP1.